A 238-amino-acid chain; its full sequence is Large ribosomal subunit protein uL1 (238 aa).

Belongs to the universal ribosomal protein uL1 family. Part of the 50S ribosomal subunit.

In terms of biological role, binds directly to 23S rRNA. The L1 stalk is quite mobile in the ribosome, and is involved in E site tRNA release. Functionally, protein L1 is also a translational repressor protein, it controls the translation of the L11 operon by binding to its mRNA. The chain is Large ribosomal subunit protein uL1 from Gloeobacter violaceus (strain ATCC 29082 / PCC 7421).